The sequence spans 316 residues: CD276 antigen (316 aa).

Positions 1–28 (MLRGWGGPSVGVCVRTALGVLCLCLTGA) are cleaved as a signal peptide. An Ig-like V-type domain is found at 29-139 (VEVQVSEDPV…DSAAVSLQVA (111 aa)). The Extracellular segment spans residues 29 to 248 (VEVQVSEDPV…GQPLTFPPEA (220 aa)). N104, N189, and N215 each carry an N-linked (GlcNAc...) asparagine glycan. The Ig-like C2-type domain maps to 145 to 238 (PSMTLEPNKD…QDAHGSVTIT (94 aa)). The cysteines at positions 165 and 220 are disulfide-linked. A helical membrane pass occupies residues 249-269 (LWVTVGLSVCLVVLLVALAFV). The Cytoplasmic portion of the chain corresponds to 270-316 (CWRKIKQSCEEENAGAEDQDGDGEGSKTALRPLKPSENKEDDGQEIA). Over residues 280-292 (EENAGAEDQDGDG) the composition is skewed to acidic residues. The segment at 280-316 (EENAGAEDQDGDGEGSKTALRPLKPSENKEDDGQEIA) is disordered.

The protein belongs to the immunoglobulin superfamily. BTN/MOG family. In terms of assembly, interacts with TREML2 and this interaction enhances T-cell activation. Ubiquitous.

It is found in the membrane. Functionally, modulates T-cell-mediated immune responses and the development of acute and chronic transplant rejection. Plays a positive regulatory role in bone formation and has a dual role in the bone-immune interface. Induces antitumor immunity as it activates both acquired and innate immunity leading to natural killer cell and CD8 T-cell dependent killing of tumor cells. The chain is CD276 antigen (Cd276) from Mus musculus (Mouse).